A 728-amino-acid polypeptide reads, in one-letter code: 1,4-alpha-glucan branching enzyme GlgB (728 aa).

D405 serves as the catalytic Nucleophile. The Proton donor role is filled by E458.

The protein belongs to the glycosyl hydrolase 13 family. GlgB subfamily. As to quaternary structure, monomer.

The enzyme catalyses Transfers a segment of a (1-&gt;4)-alpha-D-glucan chain to a primary hydroxy group in a similar glucan chain.. It functions in the pathway glycan biosynthesis; glycogen biosynthesis. Functionally, catalyzes the formation of the alpha-1,6-glucosidic linkages in glycogen by scission of a 1,4-alpha-linked oligosaccharide from growing alpha-1,4-glucan chains and the subsequent attachment of the oligosaccharide to the alpha-1,6 position. This chain is 1,4-alpha-glucan branching enzyme GlgB, found in Serratia proteamaculans (strain 568).